The primary structure comprises 420 residues: 20-oxo-5-O-mycaminosyltylactone 23-monooxygenase (420 aa).

Residues 1 to 28 form a disordered region; sequence MSSSGDARPSQKGILLPAARANDTDEAA. Positions 118, 122, 311, 367, and 369 each coordinate heme.

Belongs to the cytochrome P450 family.

It carries out the reaction 20-oxo-5-O-beta-D-mycaminosyltylonolide + 2 reduced [2Fe-2S]-[ferredoxin] + O2 + 2 H(+) = 5-O-beta-D-mycaminosyltylonolide + 2 oxidized [2Fe-2S]-[ferredoxin] + H2O. It functions in the pathway antibiotic biosynthesis; tylosin biosynthesis. In terms of biological role, involved in the biosynthesis of the complex macrolide antibiotic tylosin. Catalyzes the hydroxylation of 20-oxo-5-O-beta-mycaminosyltylactone at the C-23 position to yield 5-O-beta-mycaminosyltylonolide. This Streptomyces fradiae (Streptomyces roseoflavus) protein is 20-oxo-5-O-mycaminosyltylactone 23-monooxygenase.